Consider the following 141-residue polypeptide: Ribosome-binding factor A (141 aa).

The protein belongs to the RbfA family. In terms of assembly, monomer. Binds 30S ribosomal subunits, but not 50S ribosomal subunits or 70S ribosomes.

The protein resides in the cytoplasm. One of several proteins that assist in the late maturation steps of the functional core of the 30S ribosomal subunit. Associates with free 30S ribosomal subunits (but not with 30S subunits that are part of 70S ribosomes or polysomes). Required for efficient processing of 16S rRNA. May interact with the 5'-terminal helix region of 16S rRNA. The polypeptide is Ribosome-binding factor A (Maricaulis maris (strain MCS10) (Caulobacter maris)).